A 650-amino-acid polypeptide reads, in one-letter code: Chaperone protein DnaK (650 aa).

Threonine 200 carries the phosphothreonine; by autocatalysis modification. The segment covering 612–636 (QQAGAAGAAGAAEGAAHAGGAQQAA) has biased composition (low complexity). The disordered stretch occupies residues 612–650 (QQAGAAGAAGAAEGAAHAGGAQQAADDVVDAEFKEVKKD).

This sequence belongs to the heat shock protein 70 family.

Acts as a chaperone. The polypeptide is Chaperone protein DnaK (Burkholderia ambifaria (strain ATCC BAA-244 / DSM 16087 / CCUG 44356 / LMG 19182 / AMMD) (Burkholderia cepacia (strain AMMD))).